The sequence spans 455 residues: 3-phosphoshikimate 1-carboxyvinyltransferase (455 aa).

The disordered stretch occupies residues 1–23 (MSHGSNPRPATARKSSDLKGTLR). Residues Lys-28, Ser-29, and Arg-33 each contribute to the 3-phosphoshikimate site. A phosphoenolpyruvate-binding site is contributed by Lys-28. Positions 100 and 128 each coordinate phosphoenolpyruvate. Residues Ser-173, Gln-175, Asp-326, and Lys-353 each coordinate 3-phosphoshikimate. Gln-175 contributes to the phosphoenolpyruvate binding site. Asp-326 acts as the Proton acceptor in catalysis. Phosphoenolpyruvate is bound by residues Arg-357 and Arg-405.

The protein belongs to the EPSP synthase family. Monomer.

The protein resides in the cytoplasm. The catalysed reaction is 3-phosphoshikimate + phosphoenolpyruvate = 5-O-(1-carboxyvinyl)-3-phosphoshikimate + phosphate. It functions in the pathway metabolic intermediate biosynthesis; chorismate biosynthesis; chorismate from D-erythrose 4-phosphate and phosphoenolpyruvate: step 6/7. Its function is as follows. Catalyzes the transfer of the enolpyruvyl moiety of phosphoenolpyruvate (PEP) to the 5-hydroxyl of shikimate-3-phosphate (S3P) to produce enolpyruvyl shikimate-3-phosphate and inorganic phosphate. The chain is 3-phosphoshikimate 1-carboxyvinyltransferase from Rhizobium meliloti (strain 1021) (Ensifer meliloti).